The following is a 146-amino-acid chain: Hemoglobin subunit beta (146 aa).

In terms of domain architecture, Globin spans 2 to 146; that stretch reads QWTAEEKQLI…VAHALARKYH (145 aa). Residues histidine 63 and histidine 92 each contribute to the heme b site.

It belongs to the globin family. As to quaternary structure, heterotetramer of two alpha chains and two beta chains. As to expression, red blood cells.

Involved in oxygen transport from the lung to the various peripheral tissues. This Turdus merula (Common blackbird) protein is Hemoglobin subunit beta (HBB).